A 188-amino-acid polypeptide reads, in one-letter code: Elongation factor P (188 aa).

This sequence belongs to the elongation factor P family.

Its subcellular location is the cytoplasm. The protein operates within protein biosynthesis; polypeptide chain elongation. Functionally, involved in peptide bond synthesis. Stimulates efficient translation and peptide-bond synthesis on native or reconstituted 70S ribosomes in vitro. Probably functions indirectly by altering the affinity of the ribosome for aminoacyl-tRNA, thus increasing their reactivity as acceptors for peptidyl transferase. This is Elongation factor P from Bradyrhizobium sp. (strain BTAi1 / ATCC BAA-1182).